The following is a 252-amino-acid chain: 3-deoxy-manno-octulosonate cytidylyltransferase (252 aa).

The protein belongs to the KdsB family.

It localises to the cytoplasm. It carries out the reaction 3-deoxy-alpha-D-manno-oct-2-ulosonate + CTP = CMP-3-deoxy-beta-D-manno-octulosonate + diphosphate. The protein operates within nucleotide-sugar biosynthesis; CMP-3-deoxy-D-manno-octulosonate biosynthesis; CMP-3-deoxy-D-manno-octulosonate from 3-deoxy-D-manno-octulosonate and CTP: step 1/1. Its pathway is bacterial outer membrane biogenesis; lipopolysaccharide biosynthesis. In terms of biological role, activates KDO (a required 8-carbon sugar) for incorporation into bacterial lipopolysaccharide in Gram-negative bacteria. This is 3-deoxy-manno-octulosonate cytidylyltransferase from Rhodospirillum rubrum (strain ATCC 11170 / ATH 1.1.1 / DSM 467 / LMG 4362 / NCIMB 8255 / S1).